The sequence spans 335 residues: Acetyl-coenzyme A carboxylase carboxyl transferase subunit alpha (335 aa).

In terms of domain architecture, CoA carboxyltransferase C-terminal spans 48–308; sequence VLESKVDALR…KSLLVEELRM (261 aa).

It belongs to the AccA family. In terms of assembly, acetyl-CoA carboxylase is a heterohexamer composed of biotin carboxyl carrier protein (AccB), biotin carboxylase (AccC) and two subunits each of ACCase subunit alpha (AccA) and ACCase subunit beta (AccD).

It localises to the cytoplasm. It catalyses the reaction N(6)-carboxybiotinyl-L-lysyl-[protein] + acetyl-CoA = N(6)-biotinyl-L-lysyl-[protein] + malonyl-CoA. It participates in lipid metabolism; malonyl-CoA biosynthesis; malonyl-CoA from acetyl-CoA: step 1/1. Its function is as follows. Component of the acetyl coenzyme A carboxylase (ACC) complex. First, biotin carboxylase catalyzes the carboxylation of biotin on its carrier protein (BCCP) and then the CO(2) group is transferred by the carboxyltransferase to acetyl-CoA to form malonyl-CoA. The chain is Acetyl-coenzyme A carboxylase carboxyl transferase subunit alpha from Chlorobium phaeobacteroides (strain BS1).